The following is a 328-amino-acid chain: Lytic polysaccharide monooxygenase aasB (328 aa).

The N-terminal stretch at M1–G18 is a signal peptide. Cu(2+) is bound at residue H19. An intrachain disulfide couples C40 to C43. Residue N54 is glycosylated (N-linked (GlcNAc...) asparagine). 6 disulfide bridges follow: C66-C245, C102-C203, C118-C145, C153-C161, C167-C173, and C181-C192. Position 109 (H109) interacts with Cu(2+). Y242 contributes to the Cu(2+) binding site. N306 carries N-linked (GlcNAc...) asparagine glycosylation.

It belongs to the polysaccharide monooxygenase AA13 family. It depends on Cu(2+) as a cofactor.

The protein resides in the secreted. It catalyses the reaction starch + reduced acceptor + O2 = D-glucono-1,5-lactone-terminated malto-oligosaccharides + short-chain malto-oligosaccharides + acceptor + H2O.. Lytic polysaccharide monooxygenase involved in breakdown of granular resistant starch. The chain is Lytic polysaccharide monooxygenase aasB from Emericella nidulans (strain FGSC A4 / ATCC 38163 / CBS 112.46 / NRRL 194 / M139) (Aspergillus nidulans).